We begin with the raw amino-acid sequence, 278 residues long: Envelope glycoprotein L (278 aa).

The N-terminal stretch at 1–30 is a signal peptide; sequence MCRRPDCGFSFSPGPVILLWCCLLLPIVSS. The gL betaherpesvirus-type domain maps to 43–256; sequence VPAECPELTR…DKYYAGLPPE (214 aa). A disulfide bond links Cys154 and Cys159.

Belongs to the herpesviridae glycoprotein L (gL) family. Betaherpesvirinae gL subfamily. As to quaternary structure, interacts with glycoprotein H (gH); this interaction is necessary for the correct processing and cell surface expression of gH. Forms the envelope pentamer complex (PC) composed of gH, gL, UL128, UL130, and UL131A. The pentamer interacts with host NRP2. Forms the envelope trimer complex composed of gH, gL, and gO. The trimer interacts with host PDGFRA. The trimer also interacts with host EPHA2.

The protein localises to the virion membrane. Its subcellular location is the host cell membrane. The protein resides in the host Golgi apparatus. It is found in the host trans-Golgi network. In terms of biological role, the heterodimer glycoprotein H-glycoprotein L is required for the fusion of viral and plasma membranes leading to virus entry into the host cell. Acts as a functional inhibitor of gH and maintains gH in an inhibited form. Upon binding to host integrins, gL dissociates from gH leading to activation of the viral fusion glycoproteins gB and gH. In human cytomegalovirus, forms two distincts complexes to mediate viral entry, a trimer and a pentamer at the surface of the virion envelope. The gH-gL-gO trimer is required for infection in fibroblasts by interacting with host PDGFRA, and in glioblastoma cells by interacting with host EPHA2. The gH-gL-UL128-UL130-UL131A pentamer is essential for viral entry in epithelial, endothelial and myeloid cells via interaction with host NRP2. This Homo sapiens (Human) protein is Envelope glycoprotein L.